The chain runs to 298 residues: GTPase Era (298 aa).

Residues 4-171 (RAGFVALIGR…KEKIVSFLPE (168 aa)) form the Era-type G domain. Residues 12–19 (GRTNVGKS) form a G1 region. 12–19 (GRTNVGKS) is a GTP binding site. The G2 stretch occupies residues 38–42 (QTTRN). Residues 59 to 62 (DTPG) are G3. GTP contacts are provided by residues 59-63 (DTPGI) and 121-124 (NKID). Positions 121–124 (NKID) are G4. The segment at 150 to 152 (ISA) is G5. Residues 202–280 (LEEEVPHGVY…FLQLWVKVRK (79 aa)) enclose the KH type-2 domain.

It belongs to the TRAFAC class TrmE-Era-EngA-EngB-Septin-like GTPase superfamily. Era GTPase family. As to quaternary structure, monomer.

The protein resides in the cytoplasm. It localises to the cell membrane. An essential GTPase that binds both GDP and GTP, with rapid nucleotide exchange. Plays a role in 16S rRNA processing and 30S ribosomal subunit biogenesis and possibly also in cell cycle regulation and energy metabolism. The sequence is that of GTPase Era from Caldanaerobacter subterraneus subsp. tengcongensis (strain DSM 15242 / JCM 11007 / NBRC 100824 / MB4) (Thermoanaerobacter tengcongensis).